The following is a 247-amino-acid chain: Agamous-like MADS-box protein FUL-L (247 aa).

The MADS-box domain maps to 1–61 (MGRGRVQLKR…GKLFEYSSDS (61 aa)). Residues 88–178 (QGNWSMDYPK…AKKVKEKEKV (91 aa)) enclose the K-box domain. The segment at 224–247 (EDGAEARPSPNTLMPPWMLRHVNE) is disordered.

Expressed in tendrils and flowers.

Its subcellular location is the nucleus. Functionally, probable transcription factor involved in flower development. This Vitis vinifera (Grape) protein is Agamous-like MADS-box protein FUL-L.